A 73-amino-acid polypeptide reads, in one-letter code: Translation initiation factor IF-1 (73 aa).

Residues Met-1–Lys-72 form the S1-like domain.

This sequence belongs to the IF-1 family. As to quaternary structure, component of the 30S ribosomal translation pre-initiation complex which assembles on the 30S ribosome in the order IF-2 and IF-3, IF-1 and N-formylmethionyl-tRNA(fMet); mRNA recruitment can occur at any time during PIC assembly.

It is found in the cytoplasm. One of the essential components for the initiation of protein synthesis. Stabilizes the binding of IF-2 and IF-3 on the 30S subunit to which N-formylmethionyl-tRNA(fMet) subsequently binds. Helps modulate mRNA selection, yielding the 30S pre-initiation complex (PIC). Upon addition of the 50S ribosomal subunit IF-1, IF-2 and IF-3 are released leaving the mature 70S translation initiation complex. This chain is Translation initiation factor IF-1, found in Fusobacterium nucleatum subsp. nucleatum (strain ATCC 25586 / DSM 15643 / BCRC 10681 / CIP 101130 / JCM 8532 / KCTC 2640 / LMG 13131 / VPI 4355).